An 861-amino-acid polypeptide reads, in one-letter code: MNPIDTDDLEKHTPMMRQYLTMKAEHHDMLLFYRMGDFYELFYDDAKRASELLGISLTARGKSGGDPIPMAGIPYHAVEGYLAKLVQIGQSVAICEQIGDPATSKGPVERKVVRIVTPGTLTDEALLQERQDNLLAAVYQGKVGFGYATLDVSSGRFVIAELETKESLEAELQRTNPVEILYSEDFDAMELLHHFKGKRRRPEWEFDYDTSIKLLLAQFGTKDLHGFGITDARLSLQAAGCLMQYVKDTQRTALPHINAITRFNQTDTIVLDAATRRNLELTQNLSGGRDNTLAAVLDNTATAMGSRMLQRWIHQPLRDHAQIFARQTAVNELLETTAHESLHEQLKALGDIERIMARLALRTARPRDFARLRQALNLLPQLQQSLAQLSAPHTVKLGQLLGEFPEEQQLLERAIVDNPPMLIRDGGVIREGYNAELDEWRGLSEGATDYLVQLEAREKERTGIATLKVGYNRVHGYYIEVSRLQSQQVPLNYQRRQTLKNMERYITPELKEYEEKVLSSQGKALALEKQLWDELFDLILPKLHELQAFARAAAELDVLSNFAERAETLGYTCPELSSEIGVKIEAGRHPVVERVSQTPFIANPVTLHNQRRMLIVTGPNMGGKSTYMRQVALITLMAHIGCFVSADRAIIGPIDRIFTRIGASDDLASGRSTFMVEMTETANILHNATAQSLVLMDEIGRGTSTYDGLSLAWSAAEYLAQQIGAMTLFATHYFELTQLPELMAGVYNVHLDAIEHEDTIAFMHAVQEGAASKSYGLQVASLAGVPARVIKAAKHKLHQLESRDHQVEGVNVNGTRAPIQTLLALPEPVENPAVSKLKAINPDNLTPKQALDLLYELKRLS.

618–625 (GPNMGGKS) contributes to the ATP binding site.

The protein belongs to the DNA mismatch repair MutS family.

Functionally, this protein is involved in the repair of mismatches in DNA. It is possible that it carries out the mismatch recognition step. This protein has a weak ATPase activity. This chain is DNA mismatch repair protein MutS, found in Shewanella sp. (strain MR-7).